We begin with the raw amino-acid sequence, 493 residues long: Protein kinase PINOID 2 (493 aa).

The tract at residues 1-53 (MAAIKEESDYDSSRSSLTAPDSRRSWISDIGSSSSVSARSFGGDTPASSCRYK) is disordered. The span at 27 to 44 (ISDIGSSSSVSARSFGGD) shows a compositional bias: low complexity. Residues 80–443 (FRLVRRLGSG…SAEVKRHPFF (364 aa)) form the Protein kinase domain. Residues 86-94 (LGSGDLGNV) and Lys-120 each bind ATP. Asp-216 serves as the catalytic Proton acceptor. Residues 295 to 306 (GGGAAAGNNGDG) show a composition bias toward gly residues. 2 disordered regions span residues 295–320 (GGGA…TAEP) and 458–493 (EVPA…FDYF). Residues 307-319 (DGNDEEAETETAE) show a composition bias toward acidic residues. The region spanning 444-493 (KGVNWALVRSVRPPEVPAPPAPAPKKVMTMSKKERQEPYNYRPENHFDYF) is the AGC-kinase C-terminal domain. The segment covering 474 to 493 (SKKERQEPYNYRPENHFDYF) has biased composition (basic and acidic residues).

This sequence belongs to the protein kinase superfamily. Ser/Thr protein kinase family.

The catalysed reaction is L-seryl-[protein] + ATP = O-phospho-L-seryl-[protein] + ADP + H(+). The enzyme catalyses L-threonyl-[protein] + ATP = O-phospho-L-threonyl-[protein] + ADP + H(+). Functionally, serine/threonine-protein kinase involved in the regulation of auxin signaling. The protein is Protein kinase PINOID 2 (PID2) of Oryza sativa subsp. japonica (Rice).